The sequence spans 977 residues: P3N-PIPO polyprotein (977 aa).

In terms of domain architecture, Peptidase S30 spans 132–274; sequence TCSSSGLDNL…QSITLRATHF (143 aa). Active-site for P1 proteinase activity residues include His183, Asp192, and Ser225. An Involved in interaction with stylet and aphid transmission motif is present at residues 325-328; sequence KITC. The short motif at 583 to 585 is the Involved in virions binding and aphid transmission element; sequence PTK. In terms of domain architecture, Peptidase C6 spans 609–731; sequence MYIAKEGYCY…ESPMAQYKVG (123 aa). Catalysis depends on for helper component proteinase activity residues Cys617 and His690.

Belongs to the potyviridae P3N-PIPO polyprotein family. In terms of assembly, interacts (via PIPO domain) with host PCaP1 protein; this interaction may help to anchor the movement complex to the plasma membrane from which the complex could move to the plasmodesmata. Post-translationally, potyviral RNA is expressed as two polyproteins which undergo post-translational proteolytic processing. Genome polyprotein is processed by NIa-pro, P1 and HC-pro proteinases resulting in the production of at least ten individual proteins. P3N-PIPO is cleaved by P1 and HC-pro proteinases resulting in the production of three individual proteins. The P1 proteinase and the HC-pro cleave only their respective C-termini autocatalytically.

The protein localises to the host cell junction. It is found in the host plasmodesma. The catalysed reaction is Hydrolyzes a Gly-|-Gly bond at its own C-terminus, commonly in the sequence -Tyr-Xaa-Val-Gly-|-Gly, in the processing of the potyviral polyprotein.. Functionally, required for aphid transmission and also has proteolytic activity. Only cleaves a Gly-Gly dipeptide at its own C-terminus. Interacts with virions and aphid stylets. Acts as a suppressor of RNA-mediated gene silencing, also known as post-transcriptional gene silencing (PTGS), a mechanism of plant viral defense that limits the accumulation of viral RNAs. May have RNA-binding activity. Its function is as follows. Allows efficient cell to cell propagation, by bypassing the host cell wall barrier. Transports viral genome to neighboring plant cells directly through plasmosdesmata, without any budding. This Nicotiana tabacum (Common tobacco) protein is P3N-PIPO polyprotein.